Here is a 553-residue protein sequence, read N- to C-terminus: MPSSRLQQQFIRLWQHHQGKEAETTLQELANVLHCSKRHIRSLLNNMQKAGWLQWQAESGRGKRSQLNFLRDGWELQQQRAEELLEQHNVEKLVQLVGDKDTVRHMVLSQIERRFRQGKNLLRILYYRPFPNLLPGSPLRRSEIHLVRQIFNSLTRINEENGEPEADLAHHWQQLSSNHWRFYLRPAIHFHHGRELQMADVIASLQRLRNLPLFSHIEKVTTPTPYVIDIFLSEPDLWLSLLIGSPHAMILPQEWQKLPNFSRMPVGTGPYQVIKNSAQKLQIRAFDNYFGFRALIDQVNIWFLPELAEKLVCTTLHLESDSTDNNSLDSRIEEGCYFLLHDHRSTKCKREDVRQWLCSLLTPINLLAHCDPFYQRHWSPAYGLLLRWHHSKLISELNKPEDITHLTVTLCHQHHEYHTISQILQAILTKCGVELKINIVDYDTWFNGNTESDFWLATANFYNPLEFSLFATLYEMPLLKKCLGNDLSKEVSQWRRQELSLEEWCEKIVDEHWLHPLFHHWLELQGQRSMRGVKMNTFGWFDFKSAWFNPYEG.

The region spanning Met-1–Gln-117 is the HTH marR-type domain. A DNA-binding region (H-T-H motif) is located at residues Leu-26 to Lys-49. The interval Glu-163 to Trp-494 is solute-binding.

Its function is as follows. Activates the small RNA gene sgrS under glucose-phosphate stress conditions as well as yfdZ. Represses its own transcription under both stress and non-stress conditions. Might act as a sensor of the intracellular accumulation of phosphoglucose by binding these molecules in its C-terminal solute-binding domain. This is HTH-type transcriptional regulator SgrR from Photorhabdus laumondii subsp. laumondii (strain DSM 15139 / CIP 105565 / TT01) (Photorhabdus luminescens subsp. laumondii).